An 86-amino-acid polypeptide reads, in one-letter code: MENFDKTMKFSYEEIPKEDVKSVLQNVHRTLEERGYNAVNQIVGYLLSGDPAYIPRQNEARNQIRHIDRDVIMEELVSNYLKESKN.

It belongs to the UPF0297 family.

This chain is UPF0297 protein SERP1181, found in Staphylococcus epidermidis (strain ATCC 35984 / DSM 28319 / BCRC 17069 / CCUG 31568 / BM 3577 / RP62A).